The sequence spans 304 residues: MKRAHPEYSSSESELDETIEVEKESADENGNLSSALGSMSPTTSSQILARKRRRGIIEKRRRDRINNSLSELRRLVPSAFEKQGSAKLEKAEILQMTVDHLKMLHTAGGKGYFDAHALAMDYRSLGFRECLAEVARYLSIIEGLDASDPLRVRLVSHLNNYASQREAASGAHAGLGHIPWGSAFGHHPHVAHPLLLSQSTHGNTGTSASPTESHHQGRLATAHPEASALRAPPSGGLGPVLPVVTSASKLSPPLLSSVASLSAFPFSFGSFHLLSPNALSPSAPTQAANLGKPYRPWGTEIGAF.

A disordered region spans residues 1-52; that stretch reads MKRAHPEYSSSESELDETIEVEKESADENGNLSSALGSMSPTTSSQILARKR. Over residues 28-47 the composition is skewed to polar residues; the sequence is ENGNLSSALGSMSPTTSSQI. The tract at residues 48–117 is transcriptional repression and interaction with NCOR1 and SIN3A; the sequence is LARKRRRGII…GGKGYFDAHA (70 aa). Residues 49-104 enclose the bHLH domain; the sequence is ARKRRRGIIEKRRRDRINNSLSELRRLVPSAFEKQGSAKLEKAEILQMTVDHLKML. In terms of domain architecture, Orange spans 122-158; that stretch reads YRSLGFRECLAEVARYLSIIEGLDASDPLRVRLVSHL. Residues 197-211 show a composition bias toward polar residues; that stretch reads SQSTHGNTGTSASPT. Residues 197–234 are disordered; the sequence is SQSTHGNTGTSASPTESHHQGRLATAHPEASALRAPPS. Residues 294–297 carry the YRPW motif motif; the sequence is YRPW.

This sequence belongs to the HEY family. In terms of assembly, self-associates. Interacts with HES1 and HEYL. Interacts with HDAC1, NCOR1 and SIN3A. Interacts with GATA4 and GATA6. Interacts with CCDC89/BOIP.

The protein localises to the nucleus. Transcriptional repressor which binds preferentially to the canonical E box sequence 5'-CACGTG-3'. Downstream effector of Notch signaling required for cardiovascular development. Specifically required for the Notch-induced endocardial epithelial to mesenchymal transition, which is itself criticial for cardiac valve and septum development. May be required in conjunction with HEY2 to specify arterial cell fate or identity. Promotes maintenance of neuronal precursor cells and glial versus neuronal fate specification. Represses transcription by the cardiac transcriptional activators GATA4 and GATA6 and by the neuronal bHLH factors ASCL1/MASH1 and NEUROD4/MATH3. This chain is Hairy/enhancer-of-split related with YRPW motif protein 1 (HEY1), found in Bos taurus (Bovine).